The primary structure comprises 250 residues: Protein KPLCE (250 aa).

As to expression, skin-specific.

This Homo sapiens (Human) protein is Protein KPLCE.